We begin with the raw amino-acid sequence, 981 residues long: Transcription factor TAC1 (981 aa).

Polar residues predominate over residues 1 to 29 (MDTSSSSGTHPSTFNNLTKQQELTGNDPN). Residues 1 to 33 (MDTSSSSGTHPSTFNNLTKQQELTGNDPNDTNR) are disordered. The zn(2)-C6 fungal-type DNA-binding region spans 40-68 (CDSCRRKKIKCNGSYPCGNCIQAKNTSNC). Disordered regions lie at residues 74 to 106 (PVRK…TFSG), 165 to 199 (HSNS…TSHS), and 868 to 902 (LRDN…SNST). Low complexity predominate over residues 165-177 (HSNSSMFNNNSLS). Polar residues predominate over residues 868 to 880 (LRDNSTNHGQNNM). Residues 881–902 (NPSPTITNNTYNSNINTGSNST) are compositionally biased toward low complexity.

Post-translationally, phosphorylated. Phosphorylation leads to hyperactivation.

The protein resides in the nucleus. Drugs such as farnesol and 1-dodecanol are able to hyperactivate TAC1 probably via phosphorylation by the Mediator complex. Transcriptional activator of drug-responsive genes including the ABC-type transporters CDR1 and CDR2, as well as HSP12 and RTA3. Binds the cis-acting regulatory drug-responsive elements (DREs) with the consensus sequence 5'-CGGAWATCGGATATTTTTTT-3' in the promoters of target genes. The chain is Transcription factor TAC1 from Candida albicans (strain SC5314 / ATCC MYA-2876) (Yeast).